The following is a 310-amino-acid chain: D-alanine--D-alanine ligase (310 aa).

The ATP-grasp domain occupies 105–301; that stretch reads KQAFVSAGIL…FEELVERIIL (197 aa). 133–186 provides a ligand contact to ATP; the sequence is SFGLPLVVKPVQEGSSVGISIVKEESQLAAAVKLAFRHDDEILVEQFIKGQEVQ. Residues D254, E267, and N269 each contribute to the Mg(2+) site.

This sequence belongs to the D-alanine--D-alanine ligase family. Mg(2+) is required as a cofactor. The cofactor is Mn(2+).

The protein localises to the cytoplasm. It carries out the reaction 2 D-alanine + ATP = D-alanyl-D-alanine + ADP + phosphate + H(+). It participates in cell wall biogenesis; peptidoglycan biosynthesis. Its function is as follows. Cell wall formation. The chain is D-alanine--D-alanine ligase from Pelobacter propionicus (strain DSM 2379 / NBRC 103807 / OttBd1).